Here is a 147-residue protein sequence, read N- to C-terminus: Hemoglobin subunit gamma (147 aa).

Positions 3-147 (HFTAEEKAAI…VANALAYKYH (145 aa)) constitute a Globin domain. The heme b site is built by His-64 and His-93.

The protein belongs to the globin family. In terms of assembly, heterotetramer of two alpha chains and two gamma chains in fetal hemoglobin (Hb F). Red blood cells.

Functionally, gamma chains make up the fetal hemoglobin F, in combination with alpha chains. This chain is Hemoglobin subunit gamma (HBG), found in Elephas maximus (Indian elephant).